The sequence spans 484 residues: SPI-2 type 3 secretion system translocon protein SctE (484 aa).

2 helical membrane-spanning segments follow: residues 85–105 (FLQT…LNVF) and 152–172 (GIFG…IGAL). Coiled-coil stretches lie at residues 107–152 (NNAQ…RKAG) and 413–457 (NTEK…LYKG).

Belongs to the SctE/SipB/YopB family. As to quaternary structure, the core secretion machinery of the T3SS is composed of approximately 20 different proteins, including cytoplasmic components, a base, an export apparatus and a needle. This subunit is involved in the formation of a pore, called the translocon, in host membrane. May form a complex with SseB and SseD/SctB2. SseB is required for correct localization of SseC/SctE2 on the bacterial cell surface.

It localises to the secreted. It is found in the cell surface. The protein resides in the host membrane. Component of the type III secretion system 2 (SPI-2 T3SS), also called injectisome, which is used to inject bacterial effector proteins into eukaryotic host cells. SseC/SctE2 and SseD/SctB2 are inserted into the host membrane where they form a pore and allow the translocation of effector proteins into the cytosol of target cells. Its function is as follows. Required for the translocation of SPI-2 effector proteins. Required for systemic Salmonella infection of the mouse. Essential for SpvB-induced actin depolymerization in the host cell cytoplasm. In Salmonella typhimurium (strain LT2 / SGSC1412 / ATCC 700720), this protein is SPI-2 type 3 secretion system translocon protein SctE.